The sequence spans 785 residues: Penicillin-binding protein 1A (785 aa).

Residues Met-1–Gly-61 are disordered. Over residues Ser-33–Gly-45 the composition is skewed to pro residues. A compositionally biased stretch (gly residues) spans Arg-46–Gly-59. The chain crosses the membrane as a helical span at residues Ile-77 to Val-97. The transglycosylase stretch occupies residues Gly-118–Val-299. Glu-151 (proton donor; for transglycosylase activity) is an active-site residue. Positions Ala-392–Trp-662 are transpeptidase. Ser-426 (acyl-ester intermediate; for transpeptidase activity) is an active-site residue. Disordered stretches follow at residues Ser-605–Gly-626, Glu-690–Val-726, and Gly-738–Pro-785. Pro residues-rich tracts occupy residues Pro-708–Pro-721 and Ile-743–Pro-758. Over residues Gly-759 to Ala-775 the composition is skewed to low complexity.

It localises to the cell membrane. The catalysed reaction is [GlcNAc-(1-&gt;4)-Mur2Ac(oyl-L-Ala-gamma-D-Glu-L-Lys-D-Ala-D-Ala)](n)-di-trans,octa-cis-undecaprenyl diphosphate + beta-D-GlcNAc-(1-&gt;4)-Mur2Ac(oyl-L-Ala-gamma-D-Glu-L-Lys-D-Ala-D-Ala)-di-trans,octa-cis-undecaprenyl diphosphate = [GlcNAc-(1-&gt;4)-Mur2Ac(oyl-L-Ala-gamma-D-Glu-L-Lys-D-Ala-D-Ala)](n+1)-di-trans,octa-cis-undecaprenyl diphosphate + di-trans,octa-cis-undecaprenyl diphosphate + H(+). It catalyses the reaction Preferential cleavage: (Ac)2-L-Lys-D-Ala-|-D-Ala. Also transpeptidation of peptidyl-alanyl moieties that are N-acyl substituents of D-alanine.. The protein operates within cell wall biogenesis; peptidoglycan biosynthesis. Functionally, cell wall formation. Synthesis of cross-linked peptidoglycan from the lipid intermediates. The enzyme has a penicillin-insensitive transglycosylase N-terminal domain (formation of linear glycan strands) and a penicillin-sensitive transpeptidase C-terminal domain (cross-linking of the peptide subunits). The protein is Penicillin-binding protein 1A (ponA1) of Mycolicibacterium smegmatis (strain ATCC 700084 / mc(2)155) (Mycobacterium smegmatis).